Consider the following 1058-residue polypeptide: Non-canonical non-ribosomal peptide synthetase FUB8 (1058 aa).

Residues 43–365 (EISRDEPDRV…LASVVMHPDE (323 aa)) are adenylation (A) domain. Residues 566-643 (TTEDVVRSGI…QLSHSVWTHL (78 aa)) form the Carrier domain. The residue at position 601 (S601) is an O-(pantetheine 4'-phosphoryl)serine. The segment at 680–921 (LTGTTGEIGS…IPIDLLAEVI (242 aa)) is thioester reductase (TR) domain.

It functions in the pathway mycotoxin biosynthesis. Functionally, non-canonical non-ribosomal peptide synthetase; part of the gene cluster that mediates the biosynthesis of fusaric acid, a mycotoxin with low to moderate toxicity to animals and humans, but with high phytotoxic properties. L-aspartate is suggested as fusaric acid amino acid precursor that is activated and further processed to O-acetyl-L-homoserine by cluster enzymes aspartate kinase FUB3 and homoserine O-acetyltransferase FUB5, as well as enzymes of the primary metabolism. The polyketide synthase (PKS) FUB1 generates the triketide trans-2-hexenal which is presumptively released by the hydrolase FUB4 and linked to the NRPS-bound amino acid precursor by NAD(P)-dependent dehydrogenase FUB6. FUB1, FUB4, and the non-canonical NRPS Fub8 may form an enzyme complex. Further processing of the NRPS-bound intermediate might be carried out by FUB6 and the sulfhydrylase FUB7, enabling a spontaneous electrocyclization to close the carbon backbone of fusaric acid. Dihydrofusaric acid is likely to be released via reduction by the thioester reductase (TR) domain of FUB8 whereupon the final oxidation to fusaric acid may (also) be performed by the FMN-dependent dehydrogenase FUB9. This chain is Non-canonical non-ribosomal peptide synthetase FUB8, found in Gibberella moniliformis (strain M3125 / FGSC 7600) (Maize ear and stalk rot fungus).